Consider the following 220-residue polypeptide: Probable septum site-determining protein MinC (220 aa).

The protein belongs to the MinC family. In terms of assembly, interacts with MinD and FtsZ.

Cell division inhibitor that blocks the formation of polar Z ring septums. Rapidly oscillates between the poles of the cell to destabilize FtsZ filaments that have formed before they mature into polar Z rings. Prevents FtsZ polymerization. The protein is Probable septum site-determining protein MinC of Vibrio parahaemolyticus serotype O3:K6 (strain RIMD 2210633).